Consider the following 228-residue polypeptide: Ion-translocating oxidoreductase complex subunit E (228 aa).

5 helical membrane passes run 18–38, 69–89, 92–112, 125–145, and 182–202; these read ALVQ…ATNA, IPIY…LINA, FGLY…CIVV, LLSA…MFVL, and PFLL…MLAV.

This sequence belongs to the NqrDE/RnfAE family. In terms of assembly, the complex is composed of six subunits: RnfA, RnfB, RnfC, RnfD, RnfE and RnfG.

The protein resides in the cell inner membrane. Functionally, part of a membrane-bound complex that couples electron transfer with translocation of ions across the membrane. This chain is Ion-translocating oxidoreductase complex subunit E, found in Cronobacter sakazakii (strain ATCC BAA-894) (Enterobacter sakazakii).